Consider the following 358-residue polypeptide: Alanine racemase (358 aa).

The Proton acceptor; specific for D-alanine role is filled by Lys-34. At Lys-34 the chain carries N6-(pyridoxal phosphate)lysine. Residue Arg-129 coordinates substrate. Tyr-254 (proton acceptor; specific for L-alanine) is an active-site residue. Met-302 lines the substrate pocket.

It belongs to the alanine racemase family. Requires pyridoxal 5'-phosphate as cofactor.

It carries out the reaction L-alanine = D-alanine. Its pathway is amino-acid biosynthesis; D-alanine biosynthesis; D-alanine from L-alanine: step 1/1. Functionally, catalyzes the interconversion of L-alanine and D-alanine. May also act on other amino acids. In Hamiltonella defensa subsp. Acyrthosiphon pisum (strain 5AT), this protein is Alanine racemase (alr).